Consider the following 584-residue polypeptide: Transcription factor 7-like 1 (584 aa).

Over residues 1 to 28 (MPQLGGGRGGAGGGGGGSGAGATSGGDD) the composition is skewed to gly residues. A CTNNB1-binding region spans residues 1-71 (MPQLGGGRGG…VKSSLVNESE (71 aa)). Disordered stretches follow at residues 1–99 (MPQL…RDYF), 159–179 (ATVK…VPVV), and 194–231 (YSND…SPYY). A compositionally biased stretch (low complexity) spans 64–78 (SSLVNESENQSSSSD). Residues 80-99 (EAERRPQPARDAFQKPRDYF) are compositionally biased toward basic and acidic residues. Positions 342–410 (VKKPLNAFML…LHAQLYPTWS (69 aa)) form a DNA-binding region, HMG box. Residues 412–501 (RDNYGKKKKR…HSEQAQPLSL (90 aa)) are disordered. Residues 417 to 423 (KKKKRKR) carry the Nuclear localization signal motif. Composition is skewed to low complexity over residues 427-437 (LSQTQSQQQIQ) and 470-491 (SALD…PAAT). Over residues 492–501 (HSEQAQPLSL) the composition is skewed to polar residues.

It belongs to the TCF/LEF family. In terms of assembly, binds the armadillo repeat of CTNNB1 and forms a stable complex. Interacts with DAZAP2. Detected in the basal layer of epidermis and in outer root sheath and bulge of hair follicles.

The protein resides in the nucleus. Its function is as follows. Participates in the Wnt signaling pathway. Binds to DNA and acts as a repressor in the absence of CTNNB1, and as an activator in its presence. Necessary for the terminal differentiation of epidermal cells, the formation of keratohyalin granules and the development of the barrier function of the epidermis. The protein is Transcription factor 7-like 1 (Tcf7l1) of Mus musculus (Mouse).